Consider the following 290-residue polypeptide: Phosphate import ATP-binding protein PstB (290 aa).

Positions 25–285 constitute an ABC transporter domain; the sequence is LEARNLDFYY…PKTRRARDYL (261 aa). 57–64 provides a ligand contact to ATP; it reads GPSGCGKS.

It belongs to the ABC transporter superfamily. Phosphate importer (TC 3.A.1.7) family. As to quaternary structure, the complex is composed of two ATP-binding proteins (PstB), two transmembrane proteins (PstC and PstA) and a solute-binding protein (PstS).

The protein resides in the cell inner membrane. The enzyme catalyses phosphate(out) + ATP + H2O = ADP + 2 phosphate(in) + H(+). In terms of biological role, part of the ABC transporter complex PstSACB involved in phosphate import. Responsible for energy coupling to the transport system. The chain is Phosphate import ATP-binding protein PstB from Zymomonas mobilis subsp. mobilis (strain ATCC 31821 / ZM4 / CP4).